A 595-amino-acid chain; its full sequence is Aspartate--tRNA(Asp/Asn) ligase (595 aa).

E175 contacts L-aspartate. Positions 199–202 (QQYK) are aspartate. The L-aspartate site is built by R221 and H454. Residue 221–223 (RDE) participates in ATP binding. E488 contributes to the ATP binding site. R495 contacts L-aspartate. 540-543 (GIDR) contributes to the ATP binding site.

The protein belongs to the class-II aminoacyl-tRNA synthetase family. Type 1 subfamily. In terms of assembly, homodimer.

It is found in the cytoplasm. The catalysed reaction is tRNA(Asx) + L-aspartate + ATP = L-aspartyl-tRNA(Asx) + AMP + diphosphate. Aspartyl-tRNA synthetase with relaxed tRNA specificity since it is able to aspartylate not only its cognate tRNA(Asp) but also tRNA(Asn). Reaction proceeds in two steps: L-aspartate is first activated by ATP to form Asp-AMP and then transferred to the acceptor end of tRNA(Asp/Asn). The protein is Aspartate--tRNA(Asp/Asn) ligase of Brucella abortus (strain S19).